A 245-amino-acid chain; its full sequence is Orotidine 5'-phosphate decarboxylase (245 aa).

Substrate contacts are provided by residues Asp-22, Lys-44, 71 to 80 (DLKFHDIPNT), Thr-131, Arg-192, Gln-201, Gly-221, and Arg-222. Lys-73 acts as the Proton donor in catalysis.

It belongs to the OMP decarboxylase family. Type 1 subfamily. In terms of assembly, homodimer.

It catalyses the reaction orotidine 5'-phosphate + H(+) = UMP + CO2. It participates in pyrimidine metabolism; UMP biosynthesis via de novo pathway; UMP from orotate: step 2/2. Catalyzes the decarboxylation of orotidine 5'-monophosphate (OMP) to uridine 5'-monophosphate (UMP). This is Orotidine 5'-phosphate decarboxylase from Salmonella paratyphi A (strain ATCC 9150 / SARB42).